Consider the following 311-residue polypeptide: Homoserine kinase (311 aa).

89-99 (PFARGLGSSAT) lines the ATP pocket.

This sequence belongs to the GHMP kinase family. Homoserine kinase subfamily.

It is found in the cytoplasm. The enzyme catalyses L-homoserine + ATP = O-phospho-L-homoserine + ADP + H(+). Its pathway is amino-acid biosynthesis; L-threonine biosynthesis; L-threonine from L-aspartate: step 4/5. Functionally, catalyzes the ATP-dependent phosphorylation of L-homoserine to L-homoserine phosphate. In Halothermothrix orenii (strain H 168 / OCM 544 / DSM 9562), this protein is Homoserine kinase.